The chain runs to 272 residues: RELT-like protein 1 (272 aa).

The N-terminal stretch at 1–23 (MALWGLPGSAVLAASVFVGGAVS) is a signal peptide. Residues 24–58 (SPLVAADNTGSHTLHSRAETTPSSPTNNPGNGHPE) lie on the Extracellular side of the membrane. The disordered stretch occupies residues 33-52 (GSHTLHSRAETTPSSPTNNP). The helical transmembrane segment at 59-79 (YIAYVLVPVFFVMGLLGVLIC) threads the bilayer. The Cytoplasmic portion of the chain corresponds to 80–272 (HLLKKKGYRC…PVKRERSDTE (193 aa)). Residues 90–114 (TTEAEQEVEEEKVEKIELNDSINEN) adopt a coiled-coil conformation. Residues serine 110 and serine 115 each carry the phosphoserine modification. Disordered regions lie at residues 146–171 (DIESPVTPSTPGSPPVSPGPLSPGAT) and 235–272 (EHKSNQKERRSLMSVSGIESVNGDVPATPVKRERSDTE). Over residues 156-166 (PGSPPVSPGPL) the composition is skewed to pro residues. The segment covering 235–245 (EHKSNQKERRS) has biased composition (basic and acidic residues). Serine 245 and serine 248 each carry phosphoserine.

This sequence belongs to the RELT family. Interacts with RELT, RELL2, OXSR1 and PLSCR1.

It localises to the cell membrane. Functionally, induces activation of MAPK14/p38 cascade, when overexpressed. Induces apoptosis, when overexpressed. The sequence is that of RELT-like protein 1 (Rell1) from Mus musculus (Mouse).